The chain runs to 90 residues: Albumin (90 aa).

At Ser5 the chain carries Phosphoserine. Positions 6 and 13 each coordinate Ca(2+). Residues 25 to 90 (LLRHLVDEPQ…LVASTQAALA (66 aa)) enclose the Albumin domain. Ser61 carries the phosphoserine modification. A phosphothreonine mark is found at Thr62 and Thr64. Lys80 is subject to N6-methyllysine.

It belongs to the ALB/AFP/VDB family. As to quaternary structure, interacts with FCGRT; this interaction regulates ALB homeostasis. Interacts with TASOR. In plasma, occurs in a covalently-linked complex with chromophore-bound alpha-1-microglobulin; this interaction does not prevent fatty acid binding to ALB. As to expression, plasma.

Its subcellular location is the secreted. Functionally, binds water, Ca(2+), Na(+), K(+), fatty acids, hormones, bilirubin and drugs. Its main function is the regulation of the colloidal osmotic pressure of blood. Major zinc transporter in plasma, typically binds about 80% of all plasma zinc. Major calcium and magnesium transporter in plasma, binds approximately 45% of circulating calcium and magnesium in plasma. Potentially has more than two calcium-binding sites and might additionally bind calcium in a non-specific manner. The shared binding site between zinc and calcium suggests a crosstalk between zinc and calcium transport in the blood. The rank order of affinity is zinc &gt; calcium &gt; magnesium. Binds to the bacterial siderophore enterobactin and inhibits enterobactin-mediated iron uptake of E.coli from ferric transferrin, and may thereby limit the utilization of iron and growth of enteric bacteria such as E.coli. Does not prevent iron uptake by the bacterial siderophore aerobactin. The protein is Albumin of Capra hircus (Goat).